The chain runs to 292 residues: MNNHFKCIGIVGHPRHPTALTTHEMLYRWLCAKGYEVMVEQQIAQELQLKNVKTGTLAEIGQQADLAVVVGGDGNMLGAARTLARYDIKVIGINRGNLGFLTDLDPDNAHQQLADVLDGHYISEKRFLLEAQVCQQDCQKRISTAINEVVLHPGKVAHMIEFEVYIDEVFAFSQRSDGLIISTPTGSTAYSLSAGGPILTPSLDAITLVPMFPHTLSARPLVINSSSTIRLRFSHRRNDLEISCDSQIALPIQEGEDVLIRRCDYHLNLIHPKDYSYFNTLSSKLGWSKKLF.

Catalysis depends on Asp73, which acts as the Proton acceptor. Residues 73 to 74 (DG), 147 to 148 (NE), His158, Arg175, Asp177, 188 to 193 (TAYSLS), and Gln247 contribute to the NAD(+) site.

Belongs to the NAD kinase family. It depends on a divalent metal cation as a cofactor.

The protein localises to the cytoplasm. It catalyses the reaction NAD(+) + ATP = ADP + NADP(+) + H(+). Involved in the regulation of the intracellular balance of NAD and NADP, and is a key enzyme in the biosynthesis of NADP. Catalyzes specifically the phosphorylation on 2'-hydroxyl of the adenosine moiety of NAD to yield NADP. This chain is NAD kinase, found in Enterobacter sp. (strain 638).